Here is a 787-residue protein sequence, read N- to C-terminus: Glutamine-dependent NAD(+) synthetase (787 aa).

In terms of domain architecture, CN hydrolase spans 5–275 (VTVAVSTLNQ…VEVTLATIDL (271 aa)). Glu45 serves as the catalytic Proton acceptor; for glutaminase activity. Catalysis depends on Lys114, which acts as the For glutaminase activity. Catalysis depends on Cys175, which acts as the Nucleophile; for glutaminase activity. Residues 325-787 (MHTPEEEIAL…KIKDRTGIPV (463 aa)) form a ligase region. Residue 355–362 (PLSGGVDS) coordinates ATP. Ser357 is a catalytic residue. Ser703 bears the Phosphoserine mark.

It in the C-terminal section; belongs to the NAD synthetase family.

The catalysed reaction is deamido-NAD(+) + L-glutamine + ATP + H2O = L-glutamate + AMP + diphosphate + NAD(+) + H(+). It functions in the pathway cofactor biosynthesis; NAD(+) biosynthesis; NAD(+) from deamido-NAD(+) (L-Gln route): step 1/1. In terms of biological role, catalyzes the ATP-dependent amidation of deamido-NAD to form NAD. Uses L-glutamine as a nitrogen source. Because of its role in energy metabolism, involved in the modulation of aged-related cardiac function, mobility, and lifespan. The protein is Glutamine-dependent NAD(+) synthetase of Drosophila melanogaster (Fruit fly).